The sequence spans 381 residues: Homoserine O-succinyltransferase (381 aa).

An AB hydrolase-1 domain is found at 45–360; that stretch reads NAVLVCHALN…PHGHDAFLLD (316 aa). Residue Ser151 is the Nucleophile of the active site. Arg221 is a substrate binding site. Catalysis depends on residues Asp321 and His354. Asp355 contacts substrate.

Belongs to the AB hydrolase superfamily. MetX family. As to quaternary structure, homodimer.

It is found in the cytoplasm. It carries out the reaction L-homoserine + succinyl-CoA = O-succinyl-L-homoserine + CoA. The protein operates within amino-acid biosynthesis; L-methionine biosynthesis via de novo pathway; O-succinyl-L-homoserine from L-homoserine: step 1/1. In terms of biological role, transfers a succinyl group from succinyl-CoA to L-homoserine, forming succinyl-L-homoserine. The sequence is that of Homoserine O-succinyltransferase from Burkholderia ambifaria (strain ATCC BAA-244 / DSM 16087 / CCUG 44356 / LMG 19182 / AMMD) (Burkholderia cepacia (strain AMMD)).